The primary structure comprises 425 residues: Dipeptidase tcpJ (425 aa).

H46, D48, and E158 together coordinate Zn(2+). Substrate is bound by residues H185, R259, and D318.

Belongs to the metallo-dependent hydrolases superfamily. Peptidase M19 family. Zn(2+) is required as a cofactor.

It catalyses the reaction an L-aminoacyl-L-amino acid + H2O = 2 an L-alpha-amino acid. Its function is as follows. Dipeptidase; part of the gene cluster that mediates the biosynthesis of an unusual class of epipolythiodioxopiperazines (ETPs) lacking the reactive thiol group important for toxicity. Firstly, L-tyrosine is prenylated by tcpD, before undergoing condensation with L-glycine in a reaction catalyzed by the NRPS tcpP leading to the diketopiperazine (DKP) backbone. Afterwards the alpha-carbon of tyrosine is oxidized by the cytochrome P450 tcpC to form a hydroxyl group. However, in contrast other ETP biosynthesis pathways studied so far, tcpC is not able to bishydroxylate the DKP at both alpha-carbon positions, but hydroxylates the alpha-carbon of the tyrosine part and the nitrogen of the glycine part. The next steps involve an alpha,beta-elimination reaction catalyzed by tcpI, a methylation by the methyltransferase tcpN the action of the four enzyme cascade tcpG/K/J/I. Due to a dysfunctional cytochrome P450 monooxygenase tcpC, the pathway leads to the biosynthesis of probable non-toxic metabolites lacking the reactive thiol group. The chain is Dipeptidase tcpJ from Claviceps purpurea (strain 20.1) (Ergot fungus).